A 286-amino-acid chain; its full sequence is D-tagatose-1,6-bisphosphate aldolase subunit KbaY (286 aa).

Asp82 acts as the Proton donor in catalysis. Zn(2+)-binding residues include His83 and His180. Gly181 is a dihydroxyacetone phosphate binding site. His208 lines the Zn(2+) pocket. Residues 209 to 211 (GAS) and 230 to 233 (NVAT) each bind dihydroxyacetone phosphate.

This sequence belongs to the class II fructose-bisphosphate aldolase family. TagBP aldolase KbaY subfamily. As to quaternary structure, homotetramer. Forms a complex with KbaZ. The cofactor is Zn(2+).

The enzyme catalyses D-tagatofuranose 1,6-bisphosphate = D-glyceraldehyde 3-phosphate + dihydroxyacetone phosphate. Its pathway is carbohydrate metabolism; D-tagatose 6-phosphate degradation; D-glyceraldehyde 3-phosphate and glycerone phosphate from D-tagatose 6-phosphate: step 2/2. Its function is as follows. Catalytic subunit of the tagatose-1,6-bisphosphate aldolase KbaYZ, which catalyzes the reversible aldol condensation of dihydroxyacetone phosphate (DHAP or glycerone-phosphate) with glyceraldehyde 3-phosphate (G3P) to produce tagatose 1,6-bisphosphate (TBP). Requires KbaZ subunit for full activity and stability. The protein is D-tagatose-1,6-bisphosphate aldolase subunit KbaY of Escherichia coli O127:H6 (strain E2348/69 / EPEC).